A 1187-amino-acid chain; its full sequence is Serine/threonine-protein kinase SIK3 homolog (1187 aa).

A compositionally biased stretch (low complexity) spans M1–P15. Residues M1–A41 form a disordered region. The 252-residue stretch at Y59–M310 folds into the Protein kinase domain. ATP is bound by residues I65–V73 and K88. D181 (proton acceptor) is an active-site residue. T214 bears the Phosphothreonine mark. The residue at position 218 (S218) is a Phosphoserine. The UBA domain occupies L337 to D377. 3 disordered regions span residues L548–S587, I697–S776, and C1060–Q1092. Residues V570–P581 show a composition bias toward acidic residues. Residues V739–Q749 show a composition bias toward polar residues.

This sequence belongs to the protein kinase superfamily. CAMK Ser/Thr protein kinase family. SNF1 subfamily. The cofactor is Mg(2+).

It carries out the reaction L-seryl-[protein] + ATP = O-phospho-L-seryl-[protein] + ADP + H(+). It catalyses the reaction L-threonyl-[protein] + ATP = O-phospho-L-threonyl-[protein] + ADP + H(+). The chain is Serine/threonine-protein kinase SIK3 homolog from Danio rerio (Zebrafish).